We begin with the raw amino-acid sequence, 167 residues long: SAR-endolysin (167 aa).

Residues S10–G32 form a helical; Signal-anchor for type II membrane protein membrane-spanning segment. Catalysis depends on proton donor/acceptor residues E37 and D46.

This sequence belongs to the glycosyl hydrolase 24 family.

It localises to the host cell inner membrane. The catalysed reaction is Hydrolysis of (1-&gt;4)-beta-linkages between N-acetylmuramic acid and N-acetyl-D-glucosamine residues in a peptidoglycan and between N-acetyl-D-glucosamine residues in chitodextrins.. Signal-arrest-release (SAR) endolysin with lysozyme activity that degrades host peptidoglycans and participates with the pinholin and spanin proteins in the sequential events which lead to programmed host cell lysis releasing the mature viral particles. Once the pinholin has permeabilized the host cell membrane, the SAR-endolysin is released into the periplasm where it breaks down the peptidoglycan layer. The chain is SAR-endolysin (19) from Bacteriophage PS119.